The chain runs to 245 residues: Adapter protein MecA (245 aa).

It belongs to the MecA family. Homodimer.

Enables the recognition and targeting of unfolded and aggregated proteins to the ClpC protease or to other proteins involved in proteolysis. The polypeptide is Adapter protein MecA (Streptococcus pneumoniae (strain Hungary19A-6)).